Here is a 367-residue protein sequence, read N- to C-terminus: Mitogen-activated protein kinase 12 (367 aa).

The Protein kinase domain occupies 27–311 (YQDLQPVGSG…AAEALAHPYF (285 aa)). ATP contacts are provided by residues 33 to 41 (VGSGAYGAV) and Lys-56. The Proton acceptor role is filled by Asp-153. Thr-183 carries the phosphothreonine; by MAP2K3 and MAP2K6 modification. The TXY signature appears at 183 to 185 (TGY). Tyr-185 carries the post-translational modification Phosphotyrosine; by MAP2K3 and MAP2K6.

It belongs to the protein kinase superfamily. CMGC Ser/Thr protein kinase family. MAP kinase subfamily. Monomer. Interacts with the PDZ domain of the syntrophin SNTA1. Interacts with LIN7C, SCRIB, SYNJ2BP and SH3BP5. Interacts with PTPN4; this interaction induces the activation of PTPN4 phosphatase activity. The cofactor is Mg(2+). In terms of processing, dually phosphorylated on Thr-183 and Tyr-185 by MAP2K3/MKK3 and MAP2K6/MKK6, which activates the enzyme. Post-translationally, ubiquitinated. Ubiquitination leads to degradation by the proteasome pathway. As to expression, highly expressed in skeletal muscle, lung and testes and also in the heart and thymus of both adult and neonatal rats.

It localises to the cytoplasm. It is found in the nucleus. The protein localises to the mitochondrion. The enzyme catalyses L-seryl-[protein] + ATP = O-phospho-L-seryl-[protein] + ADP + H(+). The catalysed reaction is L-threonyl-[protein] + ATP = O-phospho-L-threonyl-[protein] + ADP + H(+). With respect to regulation, activated by phosphorylation on threonine and tyrosine. MAP2K3/MKK3 and MAP2K6/MKK6 are both essential for the activation of MAPK12 induced by environmental stress, whereas MAP2K6/MKK6 is the major MAPK12 activator in response to TNF-alpha. Its function is as follows. Serine/threonine kinase which acts as an essential component of the MAP kinase signal transduction pathway. MAPK12 is one of the four p38 MAPKs which play an important role in the cascades of cellular responses evoked by extracellular stimuli such as pro-inflammatory cytokines or physical stress leading to direct activation of transcription factors such as ELK1 and ATF2. Accordingly, p38 MAPKs phosphorylate a broad range of proteins and it has been estimated that they may have approximately 200 to 300 substrates each. Some of the targets are downstream kinases such as MAPKAPK2, which are activated through phosphorylation and further phosphorylate additional targets. Plays a role in myoblast differentiation and also in the down-regulation of cyclin D1 in response to hypoxia in adrenal cells suggesting MAPK12 may inhibit cell proliferation while promoting differentiation. Phosphorylates DLG1. Following osmotic shock, MAPK12 in the cell nucleus increases its association with nuclear DLG1, thereby causing dissociation of DLG1-SFPQ complexes. This function is independent of its catalytic activity and could affect mRNA processing and/or gene transcription to aid cell adaptation to osmolarity changes in the environment. Regulates UV-induced checkpoint signaling and repair of UV-induced DNA damage and G2 arrest after gamma-radiation exposure. MAPK12 is involved in the regulation of SLC2A1 expression and basal glucose uptake in L6 myotubes; and negatively regulates SLC2A4 expression and contraction-mediated glucose uptake in adult skeletal muscle. C-Jun (JUN) phosphorylation is stimulated by MAPK14 and inhibited by MAPK12, leading to a distinct AP-1 regulation. MAPK12 is required for the normal kinetochore localization of PLK1, prevents chromosomal instability and supports mitotic cell viability. MAPK12-signaling is also positively regulating the expansion of transient amplifying myogenic precursor cells during muscle growth and regeneration. This Rattus norvegicus (Rat) protein is Mitogen-activated protein kinase 12 (Mapk12).